Reading from the N-terminus, the 490-residue chain is ATP synthase subunit beta (490 aa).

173–180 (GGAGVGKT) provides a ligand contact to ATP.

The protein belongs to the ATPase alpha/beta chains family. In terms of assembly, F-type ATPases have 2 components, CF(1) - the catalytic core - and CF(0) - the membrane proton channel. CF(1) has five subunits: alpha(3), beta(3), gamma(1), delta(1), epsilon(1). CF(0) has three main subunits: a(1), b(2) and c(9-12). The alpha and beta chains form an alternating ring which encloses part of the gamma chain. CF(1) is attached to CF(0) by a central stalk formed by the gamma and epsilon chains, while a peripheral stalk is formed by the delta and b chains.

The protein resides in the cell membrane. The enzyme catalyses ATP + H2O + 4 H(+)(in) = ADP + phosphate + 5 H(+)(out). Produces ATP from ADP in the presence of a proton gradient across the membrane. The catalytic sites are hosted primarily by the beta subunits. The sequence is that of ATP synthase subunit beta from Bifidobacterium longum (strain DJO10A).